Here is a 348-residue protein sequence, read N- to C-terminus: tRNA N6-adenosine threonylcarbamoyltransferase (348 aa).

His119 and His123 together coordinate Fe cation. Residues 141 to 145 (LVSGG), Asp174, Gly187, Asp191, and Asn280 contribute to the substrate site. Fe cation is bound at residue Asp310.

It belongs to the KAE1 / TsaD family. Requires Fe(2+) as cofactor.

It is found in the cytoplasm. It catalyses the reaction L-threonylcarbamoyladenylate + adenosine(37) in tRNA = N(6)-L-threonylcarbamoyladenosine(37) in tRNA + AMP + H(+). Its function is as follows. Required for the formation of a threonylcarbamoyl group on adenosine at position 37 (t(6)A37) in tRNAs that read codons beginning with adenine. Is involved in the transfer of the threonylcarbamoyl moiety of threonylcarbamoyl-AMP (TC-AMP) to the N6 group of A37, together with TsaE and TsaB. TsaD likely plays a direct catalytic role in this reaction. This Enterococcus faecalis (strain ATCC 700802 / V583) protein is tRNA N6-adenosine threonylcarbamoyltransferase.